Consider the following 92-residue polypeptide: Large ribosomal subunit protein bL25 (92 aa).

This sequence belongs to the bacterial ribosomal protein bL25 family. In terms of assembly, part of the 50S ribosomal subunit; part of the 5S rRNA/L5/L18/L25 subcomplex. Contacts the 5S rRNA. Binds to the 5S rRNA independently of L5 and L18.

Its function is as follows. This is one of the proteins that binds to the 5S RNA in the ribosome where it forms part of the central protuberance. This is Large ribosomal subunit protein bL25 from Vibrio atlanticus (strain LGP32) (Vibrio splendidus (strain Mel32)).